Reading from the N-terminus, the 329-residue chain is 36 kDa antigen (329 aa).

The helical transmembrane segment at A11 to Y31 threads the bilayer.

Belongs to the membrane fusion protein (MFP) (TC 8.A.1) family.

It localises to the membrane. The polypeptide is 36 kDa antigen (Helicobacter pylori (strain ATCC 700392 / 26695) (Campylobacter pylori)).